The following is a 409-amino-acid chain: Sprouty-related, EVH1 domain-containing protein 2 (409 aa).

In terms of domain architecture, WH1 spans 5–121; it reads APPEDDSYIV…RGVRKAIEDL (117 aa). The interval 121 to 170 is disordered; that stretch reads LTEGSTTSSSTIHNEAELGDDDVFATSTDSSSNSSQKREPPVRTIASPLP. Polar residues predominate over residues 123 to 133; it reads EGSTTSSSTIH. A compositionally biased stretch (low complexity) spans 146 to 155; it reads TSTDSSSNSS. The region spanning 199 to 253 is the KBD domain; sequence PHRHVSFPDDDDEIVRINPRERNWLTGYEDYRQAPIHRKYPDTESIDSYVRFAKS. The 109-residue stretch at 299–407 folds into the SPR domain; the sequence is RCIYCRDMFN…CGCCGGKHKA (109 aa).

Its subcellular location is the cell membrane. It is found in the cytoplasmic vesicle. It localises to the secretory vesicle membrane. The protein resides in the cytoplasm. Functionally, negatively regulates Ras signaling pathways and downstream activation of MAP kinases. This Xenopus tropicalis (Western clawed frog) protein is Sprouty-related, EVH1 domain-containing protein 2 (spred2).